Reading from the N-terminus, the 219-residue chain is Interleukin-12 subunit alpha (219 aa).

The first 22 residues, Met1 to Ala22, serve as a signal peptide directing secretion. Residues Asn24, Asn93, and Asn107 are each glycosylated (N-linked (GlcNAc...) asparagine). 3 disulfides stabilise this stretch: Cys37–Cys110, Cys64–Cys196, and Cys85–Cys123.

The protein belongs to the IL-6 superfamily. In terms of assembly, heterodimer with IL12B; disulfide-linked. This heterodimer is known as interleukin IL-12. Heterodimer with EBI3/IL27B; not disulfide-linked. This heterodimer is known as interleukin IL-35. Interacts with NBR1; this interaction promotes IL-12 secretion.

The protein localises to the secreted. Functionally, heterodimerizes with IL12B to form the IL-12 cytokine or with EBI3/IL27B to form the IL-35 cytokine. IL-12 is primarily produced by professional antigen-presenting cells (APCs) such as B-cells and dendritic cells (DCs) as well as macrophages and granulocytes and regulates T-cell and natural killer-cell responses, induces the production of interferon-gamma (IFN-gamma), favors the differentiation of T-helper 1 (Th1) cells and is an important link between innate resistance and adaptive immunity. Mechanistically, exerts its biological effects through a receptor composed of IL12R1 and IL12R2 subunits. Binding to the receptor results in the rapid tyrosine phosphorylation of a number of cellular substrates including the JAK family kinases TYK2 and JAK2. In turn, recruited STAT4 gets phosphorylated and translocates to the nucleus where it regulates cytokine/growth factor responsive genes. As part of IL-35, plays essential roles in maintaining the immune homeostasis of the liver microenvironment and also functions as an immune-suppressive cytokine. Mediates biological events through unconventional receptors composed of IL12RB2 and gp130/IL6ST heterodimers or homodimers. Signaling requires the transcription factors STAT1 and STAT4, which form a unique heterodimer that binds to distinct DNA sites. In Macaca mulatta (Rhesus macaque), this protein is Interleukin-12 subunit alpha (IL12A).